A 182-amino-acid chain; its full sequence is Ribulose bisphosphate carboxylase small subunit, chloroplastic 4 (182 aa).

The transit peptide at 1–41 (MSAAMMNKSVVLSKQCTKPAATPKVVTSKRSFASTVANKNR) directs the protein to the chloroplast.

This sequence belongs to the RuBisCO small chain family. As to quaternary structure, heterohexadecamer of 8 large and 8 small subunits.

It is found in the plastid. The protein resides in the chloroplast. In terms of biological role, ruBisCO catalyzes two reactions: the carboxylation of D-ribulose 1,5-bisphosphate, the primary event in carbon dioxide fixation, as well as the oxidative fragmentation of the pentose substrate. Both reactions occur simultaneously and in competition at the same active site. Although the small subunit is not catalytic it is essential for maximal activity. The polypeptide is Ribulose bisphosphate carboxylase small subunit, chloroplastic 4 (Acetabularia acetabulum (Mermaid's wine glass)).